We begin with the raw amino-acid sequence, 149 residues long: MKVLLLEDVKNLGKAGEVCEVKDGYGNNFLIANKKAKLATNEVINKYKAEVKKKAETEALEKAQKLQMAETLQTVTLTIHKKVGANGSLFGAITKEEITERLKEHHANLNLDKKDIELKHPIKSTGIYEIEVKLGSGIVGVFKIDVVAE.

The protein belongs to the bacterial ribosomal protein bL9 family.

Functionally, binds to the 23S rRNA. In Helicobacter acinonychis (strain Sheeba), this protein is Large ribosomal subunit protein bL9.